Reading from the N-terminus, the 816-residue chain is Mechanosensitive cation channel TMEM63B (816 aa).

Topologically, residues 1-46 (MLPYVIATLGSAGSTCKASTCSNSTKDYCYSARIRSTVLQGLPFGG) are extracellular. Residues 47–71 (VPTVLALDFMCFLALLFVFSILRKV) form a helical membrane-spanning segment. Residues C57 and C119 are each lipidated (S-palmitoyl cysteine). The Cytoplasmic segment spans residues 72–138 (AWDYGRLALV…KDDEIRDKCG (67 aa)). Residues 139–171 (GDAVHYLSFQRHIIGLLVAVGVLSVGIVLPVNF) traverse the membrane as a helical segment. Topologically, residues 172-195 (SGDLLENNAYSFGRTTIANLNSGN) are extracellular. Residues 196–220 (NLLWLHTSFAFLYLLLTVYSMRRHT) form a helical membrane-spanning segment. Topologically, residues 221 to 420 (SKMRYKEDDL…IYWEHLSIRG (200 aa)) are cytoplasmic. Positions 224–419 (RYKEDDLVKR…NIYWEHLSIR (196 aa)) are intracellular linker IL2; confers mechanosensitivity. 2 S-palmitoyl cysteine lipidation sites follow: C375 and C391. The helical transmembrane segment at 421–450 (FIWWIRCLVINVVLFILLFFLTTPAIIITT) threads the bilayer. At 451 to 465 (MDKFNVTKPVEYLNN) the chain is on the extracellular side. Residues 466-495 (PIITQFFPTLLLWCFSALLPTIVYYSAFFE) form a helical membrane-spanning segment. The Cytoplasmic portion of the chain corresponds to 496–499 (AHWT). A helical transmembrane segment spans residues 500 to 536 (RSGENRTTMHKCYTFLIFMVLLLPSLGLSSLDVFFRW). Residues 537-559 (LFDKKFLAEAAVRFECVFLPDNG) are Extracellular-facing. A helical transmembrane segment spans residues 560-592 (AFFVNYVIASAFIGNAMDLLRIPGLLMYMIRLC). The gating helix stretch occupies residues 560-592 (AFFVNYVIASAFIGNAMDLLRIPGLLMYMIRLC). Residues 593–612 (LARSAAERRNVKRHQAYEFQ) lie on the Cytoplasmic side of the membrane. The helical transmembrane segment at 613–631 (FGAAYAWMMCVFTVVMTYS) threads the bilayer. Residues 632 to 634 (ITC) lie on the Extracellular side of the membrane. The helical transmembrane segment at 635–659 (PIIVPFGLMYMLLKHLVDRYNLYYA) threads the bilayer. At 660–666 (YLPAKLD) the chain is on the cytoplasmic side. A helical membrane pass occupies residues 667–695 (KKIHSGAVNQVVAAPILCLFWLLFFSTMR). The Extracellular portion of the chain corresponds to 696–700 (TGFLA). A helical transmembrane segment spans residues 701-721 (PTSMFTFVVLVITIVICLCHV). Residues C719 and C722 are each lipidated (S-palmitoyl cysteine). At 722–816 (CFGHFKYLSA…DSLIENEIRQ (95 aa)) the chain is on the cytoplasmic side.

This sequence belongs to the CSC1 (TC 1.A.17) family. Monomer. Palmitoylation is required for localization to the plasma membrane and stability.

Its subcellular location is the cell membrane. The protein localises to the lysosome membrane. The protein resides in the early endosome membrane. It carries out the reaction Ca(2+)(in) = Ca(2+)(out). The catalysed reaction is Mg(2+)(in) = Mg(2+)(out). It catalyses the reaction K(+)(in) = K(+)(out). The enzyme catalyses Na(+)(in) = Na(+)(out). It carries out the reaction Cs(+)(in) = Cs(+)(out). In terms of biological role, mechanosensitive cation channel with low conductance and high activation threshold. Osmosensitive cation channel preferentially activated by hypotonic stress. Also acts as a phospholipid scramblase in response to changes in membrane structure: upon changes in membrane curvature and thickness, alters its conformation and translocates phospholipids, thereby controlling plasma membrane lipid distribution. This chain is Mechanosensitive cation channel TMEM63B, found in Gallus gallus (Chicken).